The chain runs to 293 residues: MTSLTLPDIAAQSAQQPLPLDWVGMCGIAMPVQFEGRQLSALADAGVSLDDGASRGIHMSRLYLALEALERDTLTPRLIHQVLEQFLFSHEGLSASAHLRLQFDHLLKRPALVSPLAGWKHYPVAIDARLKAEMFHVELSVEIPYSSTCPCSAALARQLIQERFDQDFTGQAVDRQGVRAWLGSSSGIVATPHSQRSMAKLQVRLVGDELPVTVLIDKAEAALGTAVQTAVKRADEQAFALANGQNLMFCEDAARRLNLALRQLDWVAGFTVRVEHAESLHAHDAVAVSRFQR.

It belongs to the GTP cyclohydrolase IV family.

It carries out the reaction GTP + H2O = 7,8-dihydroneopterin 3'-triphosphate + formate + H(+). It functions in the pathway cofactor biosynthesis; 7,8-dihydroneopterin triphosphate biosynthesis; 7,8-dihydroneopterin triphosphate from GTP: step 1/1. Its function is as follows. Converts GTP to 7,8-dihydroneopterin triphosphate. This chain is GTP cyclohydrolase FolE2, found in Pseudomonas entomophila (strain L48).